The sequence spans 379 residues: Tubby-like F-box protein 7 (379 aa).

Over residues F18–E28 the composition is skewed to polar residues. The interval F18–S41 is disordered. One can recognise an F-box domain in the interval S42–G97. 2 disordered regions span residues S193–A212 and T248–K278.

The protein belongs to the TUB family. Ubiquitous.

This chain is Tubby-like F-box protein 7, found in Arabidopsis thaliana (Mouse-ear cress).